Reading from the N-terminus, the 3380-residue chain is Apolipophorins (3380 aa).

Positions methionine 1–serine 21 are cleaved as a signal peptide. One can recognise a Vitellogenin domain in the interval tyrosine 40–valine 646. N-linked (GlcNAc...) asparagine glycans are attached at residues asparagine 132, asparagine 649, asparagine 969, asparagine 2174, asparagine 2851, and asparagine 3177. Residues alanine 2815 to alanine 2979 enclose the VWFD domain. The cysteines at positions 2839 and 2978 are disulfide-linked.

In terms of processing, cleaved into 2 chains by furin protease. However, prevention of cleavage does not impair its function. Post-translationally, N-glycosylated. As to expression, present in brain, hemolymph, fat body and eyes.

The protein resides in the secreted. In terms of biological role, constitutes the major component of lipophorin, which mediates transport for various types of lipids in hemolymph. Acts by forming lipoprotein particles that bind lipoproteins and lipids. May be required for morphogens wingless (wg) and hedgehog (hh) function, possibly by acting as vehicles for the movement of wg and hh. This chain is Apolipophorins, found in Locusta migratoria (Migratory locust).